The following is a 195-amino-acid chain: HTH-type transcriptional regulator BetI (195 aa).

The region spanning 8 to 68 (SIRRRQLIDA…ATMRDITSQL (61 aa)) is the HTH tetR-type domain. Residues 31-50 (TIAQIARRAGVSTGIISHYF) constitute a DNA-binding region (H-T-H motif).

The protein operates within amine and polyamine biosynthesis; betaine biosynthesis via choline pathway [regulation]. In terms of biological role, repressor involved in the biosynthesis of the osmoprotectant glycine betaine. It represses transcription of the choline transporter BetT and the genes of BetAB involved in the synthesis of glycine betaine. This Escherichia coli O127:H6 (strain E2348/69 / EPEC) protein is HTH-type transcriptional regulator BetI.